A 497-amino-acid polypeptide reads, in one-letter code: Angiopoietin-1 (497 aa).

The first 15 residues, 1–15 (MTVFLSFAFLAAILT), serve as a signal peptide directing secretion. N92, N122, N154, N243, and N294 each carry an N-linked (GlcNAc...) asparagine glycan. Residues 153 to 261 (LNQTSRLEIQ…LELMDTVHNL (109 aa)) adopt a coiled-coil conformation. The Fibrinogen C-terminal domain occupies 276 to 496 (KEEEKPFRDC…STTMMIRPLD (221 aa)). 2 disulfides stabilise this stretch: C285-C314 and C438-C451.

As to quaternary structure, homooligomer. Interacts with TEK/TIE2. Interacts with SVEP1/polydom. Interacts with THBD; this interaction significantly inhibits the generation of activated PC and TAFIa/CPB2 by the thrombin/thrombomodulin complex.

The protein resides in the secreted. Its function is as follows. Binds and activates TIE2 receptor by inducing its tyrosine phosphorylation. Implicated in endothelial developmental processes later and distinct from that of VEGF. Appears to play a crucial role in mediating reciprocal interactions between the endothelium and surrounding matrix and mesenchyme. Mediates blood vessel maturation/stability. It may play an important role in the heart early development. This is Angiopoietin-1 (ANGPT1) from Bos taurus (Bovine).